The chain runs to 269 residues: Energy-coupling factor transporter transmembrane protein EcfT (269 aa).

Transmembrane regions (helical) follow at residues 28–48, 49–69, 73–93, 109–129, and 246–266; these read MIIY…LLLL, AFTL…FNGV, IGII…GSVL, AILI…LTLT, and TLAI…KSPS.

It belongs to the energy-coupling factor EcfT family. In terms of assembly, forms a stable energy-coupling factor (ECF) transporter complex composed of 2 membrane-embedded substrate-binding proteins (S component), 2 ATP-binding proteins (A component) and 2 transmembrane proteins (T component). May be able to interact with more than 1 S component at a time.

It localises to the cell membrane. Its function is as follows. Transmembrane (T) component of an energy-coupling factor (ECF) ABC-transporter complex. Unlike classic ABC transporters this ECF transporter provides the energy necessary to transport a number of different substrates. This chain is Energy-coupling factor transporter transmembrane protein EcfT, found in Streptococcus equi subsp. equi (strain 4047).